The primary structure comprises 270 residues: Aliphatic sulfonates import ATP-binding protein SsuB 3 (270 aa).

One can recognise an ABC transporter domain in the interval 17–238 (LAVRKLKKAF…VRGSHRLAAL (222 aa)). Position 49–56 (49–56 (GRSGCGKS)) interacts with ATP.

This sequence belongs to the ABC transporter superfamily. Aliphatic sulfonates importer (TC 3.A.1.17.2) family. The complex is composed of two ATP-binding proteins (SsuB), two transmembrane proteins (SsuC) and a solute-binding protein (SsuA).

The protein resides in the cell inner membrane. The enzyme catalyses ATP + H2O + aliphatic sulfonate-[sulfonate-binding protein]Side 1 = ADP + phosphate + aliphatic sulfonateSide 2 + [sulfonate-binding protein]Side 1.. In terms of biological role, part of the ABC transporter complex SsuABC involved in aliphatic sulfonates import. Responsible for energy coupling to the transport system. The chain is Aliphatic sulfonates import ATP-binding protein SsuB 3 from Pseudomonas syringae pv. syringae (strain B728a).